The following is a 434-amino-acid chain: Chaperone SurA (434 aa).

Residues 1 to 29 (MKTLRLNFRSAILKALGALLLLQGCLAHA) form the signal peptide. 2 consecutive PpiC domains span residues 180 to 281 (AEEY…AMLE) and 290 to 389 (VEQS…QVQD).

The protein localises to the periplasm. The enzyme catalyses [protein]-peptidylproline (omega=180) = [protein]-peptidylproline (omega=0). In terms of biological role, chaperone involved in the correct folding and assembly of outer membrane proteins. Recognizes specific patterns of aromatic residues and the orientation of their side chains, which are found more frequently in integral outer membrane proteins. May act in both early periplasmic and late outer membrane-associated steps of protein maturation. The polypeptide is Chaperone SurA (Hahella chejuensis (strain KCTC 2396)).